We begin with the raw amino-acid sequence, 658 residues long: UvrABC system protein B (658 aa).

Residues Glu-26 to Arg-413 form the Helicase ATP-binding domain. Position 39-46 (Gly-39–Thr-46) interacts with ATP. The short motif at Tyr-92–Ile-115 is the Beta-hairpin element. A Helicase C-terminal domain is found at Gln-430 to Ile-596. Residues Glu-622 to Glu-657 enclose the UVR domain.

The protein belongs to the UvrB family. As to quaternary structure, forms a heterotetramer with UvrA during the search for lesions. Interacts with UvrC in an incision complex.

It is found in the cytoplasm. Functionally, the UvrABC repair system catalyzes the recognition and processing of DNA lesions. A damage recognition complex composed of 2 UvrA and 2 UvrB subunits scans DNA for abnormalities. Upon binding of the UvrA(2)B(2) complex to a putative damaged site, the DNA wraps around one UvrB monomer. DNA wrap is dependent on ATP binding by UvrB and probably causes local melting of the DNA helix, facilitating insertion of UvrB beta-hairpin between the DNA strands. Then UvrB probes one DNA strand for the presence of a lesion. If a lesion is found the UvrA subunits dissociate and the UvrB-DNA preincision complex is formed. This complex is subsequently bound by UvrC and the second UvrB is released. If no lesion is found, the DNA wraps around the other UvrB subunit that will check the other stand for damage. This Bacillus cereus (strain ZK / E33L) protein is UvrABC system protein B.